The following is a 127-amino-acid chain: Fluoride-specific ion channel FluC (127 aa).

4 consecutive transmembrane segments (helical) span residues 7–27 (VYVA…VAWV), 38–58 (GTLA…VYVV), 70–90 (LIMV…LEAW), and 102–122 (LAYI…GIAL). Residues Gly-77 and Thr-80 each contribute to the Na(+) site.

Belongs to the fluoride channel Fluc/FEX (TC 1.A.43) family.

The protein localises to the cell inner membrane. The enzyme catalyses fluoride(in) = fluoride(out). With respect to regulation, na(+) is not transported, but it plays an essential structural role and its presence is essential for fluoride channel function. Fluoride-specific ion channel. Important for reducing fluoride concentration in the cell, thus reducing its toxicity. This Hahella chejuensis (strain KCTC 2396) protein is Fluoride-specific ion channel FluC.